Here is a 274-residue protein sequence, read N- to C-terminus: Large ribosomal subunit protein uL2cz/uL2cy (274 aa).

Residues Pro-225–Lys-274 are disordered.

Belongs to the universal ribosomal protein uL2 family. As to quaternary structure, part of the 50S ribosomal subunit.

It localises to the plastid. Its subcellular location is the chloroplast. The protein is Large ribosomal subunit protein uL2cz/uL2cy (rpl2-A) of Crucihimalaya wallichii (Rock-cress).